Reading from the N-terminus, the 340-residue chain is Ketol-acid reductoisomerase (NADP(+)) (340 aa).

Positions 3–182 constitute a KARI N-terminal Rossmann domain; that stretch reads VQMEYEKDVK…GAARVGLLET (180 aa). NADP(+) is bound by residues 26-29, Arg49, Ser53, and 83-86; these read YGSQ and DEIQ. His108 is a catalytic residue. Gly134 provides a ligand contact to NADP(+). Positions 183 to 328 constitute a KARI C-terminal knotted domain; that stretch reads TYKEETEEDL…AELRKAMPFV (146 aa). Positions 191, 195, 227, and 231 each coordinate Mg(2+). Ser252 is a binding site for substrate.

Belongs to the ketol-acid reductoisomerase family. Mg(2+) is required as a cofactor.

It catalyses the reaction (2R)-2,3-dihydroxy-3-methylbutanoate + NADP(+) = (2S)-2-acetolactate + NADPH + H(+). The enzyme catalyses (2R,3R)-2,3-dihydroxy-3-methylpentanoate + NADP(+) = (S)-2-ethyl-2-hydroxy-3-oxobutanoate + NADPH + H(+). Its pathway is amino-acid biosynthesis; L-isoleucine biosynthesis; L-isoleucine from 2-oxobutanoate: step 2/4. It functions in the pathway amino-acid biosynthesis; L-valine biosynthesis; L-valine from pyruvate: step 2/4. Involved in the biosynthesis of branched-chain amino acids (BCAA). Catalyzes an alkyl-migration followed by a ketol-acid reduction of (S)-2-acetolactate (S2AL) to yield (R)-2,3-dihydroxy-isovalerate. In the isomerase reaction, S2AL is rearranged via a Mg-dependent methyl migration to produce 3-hydroxy-3-methyl-2-ketobutyrate (HMKB). In the reductase reaction, this 2-ketoacid undergoes a metal-dependent reduction by NADPH to yield (R)-2,3-dihydroxy-isovalerate. The polypeptide is Ketol-acid reductoisomerase (NADP(+)) (Streptococcus pneumoniae (strain Hungary19A-6)).